The sequence spans 514 residues: Cytidine and dCMP deaminase domain-containing protein 1 (514 aa).

Composition is skewed to polar residues over residues M1–E11 and S18–T27. 2 disordered regions span residues M1–T27 and R55–R83. The segment covering Q59 to R83 has biased composition (basic and acidic residues). Residues G70–E168 form the CMP/dCMP-type deaminase 1 domain. The Zn(2+) site is built by H109, C134, and C137. The Nuclear export signal signature appears at N271 to L283. The CMP/dCMP-type deaminase 2 domain maps to E317–E482. Residue H398 coordinates Zn(2+). E400 (proton donor) is an active-site residue. Zn(2+)-binding residues include C426 and C429. Residues G480–H514 are disordered. Residues E485–H514 are compositionally biased toward basic and acidic residues. Residues R488–R510 carry the Bipartite nuclear localization signal motif.

The protein belongs to the cytidine and deoxycytidylate deaminase family. Zn(2+) serves as cofactor. Widely expressed. Expressed at high levels in the testis.

The protein localises to the cytoplasm. The protein resides in the nucleus. It catalyses the reaction 2'-deoxycytidine + H2O + H(+) = 2'-deoxyuridine + NH4(+). The catalysed reaction is cytidine + H2O + H(+) = uridine + NH4(+). Functionally, catalyzes the deamination of cytidine and deoxycytidine into uridine and deoxyuridine, respectively. May play an important role in testicular development and spermatogenesis. This chain is Cytidine and dCMP deaminase domain-containing protein 1 (CDADC1), found in Homo sapiens (Human).